The sequence spans 1206 residues: Phosphoglucan, water dikinase, chloroplastic (1206 aa).

Disordered stretches follow at residues 1-20 and 52-71; these read MTSL…PRRG and RSAA…DSSK. The transit peptide at 1–56 directs the protein to the chloroplast; the sequence is MTSLRPLETSLSIGGRPRRGLVLPPPGVGAGVLLRRGAMALPGRRGFACRGRSAAS. Positions 67 to 168 constitute a CBM20 domain; sequence RDSSKQPLVH…KFDIVCHWNR (102 aa). His-776 (tele-phosphohistidine intermediate) is an active-site residue.

The protein belongs to the PEP-utilizing enzyme family. As to quaternary structure, homodimer. Mg(2+) is required as a cofactor.

It localises to the plastid. The protein resides in the chloroplast. The catalysed reaction is [(1-&gt;4)-6-phospho-alpha-D-glucosyl](n) + n ATP + n H2O = [(1-&gt;4)-3,6-bisphospho-alpha-D-glucosyl](n) + n AMP + n phosphate + 2n H(+). In terms of biological role, mediates the incorporation of phosphate into starch-like phospho-alpha-glucan, mostly at the C-3 position of glucose units. May be required for starch degradation, suggesting that the phosphate content of starch regulates its degradability. This chain is Phosphoglucan, water dikinase, chloroplastic (GWD3), found in Oryza sativa subsp. japonica (Rice).